A 288-amino-acid chain; its full sequence is Release factor glutamine methyltransferase (288 aa).

Positions 142 and 186 each coordinate S-adenosyl-L-methionine. 186-189 is a binding site for substrate; it reads NPPY.

Belongs to the protein N5-glutamine methyltransferase family. PrmC subfamily.

It carries out the reaction L-glutaminyl-[peptide chain release factor] + S-adenosyl-L-methionine = N(5)-methyl-L-glutaminyl-[peptide chain release factor] + S-adenosyl-L-homocysteine + H(+). Its function is as follows. Methylates the class 1 translation termination release factors RF1/PrfA and RF2/PrfB on the glutamine residue of the universally conserved GGQ motif. The sequence is that of Release factor glutamine methyltransferase from Mycobacterium leprae (strain TN).